The following is a 252-amino-acid chain: Ubiquinone biosynthesis O-methyltransferase (252 aa).

Positions 45, 76, 97, and 141 each coordinate S-adenosyl-L-methionine.

It belongs to the methyltransferase superfamily. UbiG/COQ3 family.

The enzyme catalyses a 3-demethylubiquinol + S-adenosyl-L-methionine = a ubiquinol + S-adenosyl-L-homocysteine + H(+). It catalyses the reaction a 3-(all-trans-polyprenyl)benzene-1,2-diol + S-adenosyl-L-methionine = a 2-methoxy-6-(all-trans-polyprenyl)phenol + S-adenosyl-L-homocysteine + H(+). It functions in the pathway cofactor biosynthesis; ubiquinone biosynthesis. O-methyltransferase that catalyzes the 2 O-methylation steps in the ubiquinone biosynthetic pathway. The sequence is that of Ubiquinone biosynthesis O-methyltransferase from Caulobacter vibrioides (strain ATCC 19089 / CIP 103742 / CB 15) (Caulobacter crescentus).